We begin with the raw amino-acid sequence, 450 residues long: Benzene 1,2-dioxygenase subunit alpha (450 aa).

The region spanning 54-163 (WLLLGHETQI…VETYKGLIFA (110 aa)) is the Rieske domain. [2Fe-2S] cluster contacts are provided by cysteine 96, histidine 98, cysteine 116, and histidine 119. The Fe cation site is built by histidine 222 and histidine 228.

The protein belongs to the bacterial ring-hydroxylating dioxygenase alpha subunit family. In terms of assembly, this dioxygenase system consists of four proteins: the two subunits of the hydroxylase component (BnzA and BnzB), a ferredoxin (BnzC) and a ferredoxin reductase (BnzD). The cofactor is [2Fe-2S] cluster. It depends on Fe cation as a cofactor.

The catalysed reaction is benzene + NADH + O2 + H(+) = cis-1,2-dihydrobenzene-1,2-diol + NAD(+). It catalyses the reaction toluene + NADH + O2 + H(+) = (1S,2R)-3-methylcyclohexa-3,5-diene-1,2-diol + NAD(+). Its pathway is aromatic compound metabolism; benzene degradation; catechol from benzene: step 1/2. It participates in xenobiotic degradation; toluene degradation. The protein operates within xenobiotic degradation; xylene degradation. Catalyzes both the oxidation of benzene and toluene. The chain is Benzene 1,2-dioxygenase subunit alpha (bnzA) from Pseudomonas putida (strain ATCC 700007 / DSM 6899 / JCM 31910 / BCRC 17059 / LMG 24140 / F1).